The sequence spans 214 residues: Neurogenin-3 (214 aa).

Over residues Met1 to Thr14 the composition is skewed to polar residues. A disordered region spans residues Met1–Asn98. Basic and acidic residues predominate over residues Arg15–Glu26. Basic residues-rich tracts occupy residues Ala57–Arg70 and Lys79–Ala88. The bHLH domain maps to Ser83–Leu135.

Efficient DNA binding requires dimerization with another bHLH protein. Interacts with ATOH8.

Its subcellular location is the nucleus. Functionally, acts as a transcriptional regulator. Together with NKX2-2, initiates transcriptional activation of NEUROD1. Involved in neurogenesis. Also required for the specification of a common precursor of the 4 pancreatic endocrine cell types. This is Neurogenin-3 (NEUROG3) from Homo sapiens (Human).